A 77-amino-acid chain; its full sequence is Translation initiation factor IF-1, chloroplastic (77 aa).

One can recognise an S1-like domain in the interval 1–71; that stretch reads MKEQKWIHEG…SRGRIIYRLR (71 aa).

Belongs to the IF-1 family. Component of the 30S ribosomal translation pre-initiation complex which assembles on the 30S ribosome in the order IF-2 and IF-3, IF-1 and N-formylmethionyl-tRNA(fMet); mRNA recruitment can occur at any time during PIC assembly.

Its subcellular location is the plastid. It is found in the chloroplast. Its function is as follows. One of the essential components for the initiation of protein synthesis. Stabilizes the binding of IF-2 and IF-3 on the 30S subunit to which N-formylmethionyl-tRNA(fMet) subsequently binds. Helps modulate mRNA selection, yielding the 30S pre-initiation complex (PIC). Upon addition of the 50S ribosomal subunit IF-1, IF-2 and IF-3 are released leaving the mature 70S translation initiation complex. The protein is Translation initiation factor IF-1, chloroplastic of Buxus microphylla (Littleleaf boxwood).